We begin with the raw amino-acid sequence, 369 residues long: MLTKGVRALAWSPRRYITLDAEAAKPVVAKRRRMTEFTDKLNKGPSFEDFLTGKAAQMTLDPLEEARQNAEESKKLPAWLKVPIPKGKNFHKLKEDVRDLKLSTVCEEAKCPNIGECWGGNKGSATATIMLLGDTCTRGCRFCSVKTNRTPAKPDPKEPENTAEAISRWGLGYVVLTMVDRDDLPDGGAHHLAETVQRIKQKAPHILVETLAGDFRGNLEMVDVMARSGLDVYAHNVETVEALTPHVRDRRATYQQSLSVLKRAKQTVPTLVTKTSIMLGMGETDEQVLQTMKDLRAVDCDVVTFGQYMRPTRRHMKVVEYVKPEKFDYWKEKALELGFLYCASGPLVRSSYKAGEAYIENVLRNRRQA.

The N-terminal 32 residues, 1–32 (MLTKGVRALAWSPRRYITLDAEAAKPVVAKRR), are a transit peptide targeting the mitochondrion. 7 residues coordinate [4Fe-4S] cluster: Cys106, Cys111, Cys117, Cys136, Cys140, Cys143, and Ser351. Positions 121–340 (NKGSATATIM…KEKALELGFL (220 aa)) constitute a Radical SAM core domain.

The protein belongs to the radical SAM superfamily. Lipoyl synthase family. [4Fe-4S] cluster is required as a cofactor.

The protein resides in the mitochondrion. It carries out the reaction [[Fe-S] cluster scaffold protein carrying a second [4Fe-4S](2+) cluster] + N(6)-octanoyl-L-lysyl-[protein] + 2 oxidized [2Fe-2S]-[ferredoxin] + 2 S-adenosyl-L-methionine + 4 H(+) = [[Fe-S] cluster scaffold protein] + N(6)-[(R)-dihydrolipoyl]-L-lysyl-[protein] + 4 Fe(3+) + 2 hydrogen sulfide + 2 5'-deoxyadenosine + 2 L-methionine + 2 reduced [2Fe-2S]-[ferredoxin]. It participates in protein modification; protein lipoylation via endogenous pathway; protein N(6)-(lipoyl)lysine from octanoyl-[acyl-carrier-protein]: step 2/2. Functionally, catalyzes the radical-mediated insertion of two sulfur atoms into the C-6 and C-8 positions of the octanoyl moiety bound to the lipoyl domains of lipoate-dependent enzymes, thereby converting the octanoylated domains into lipoylated derivatives. The chain is Lipoyl synthase, mitochondrial from Eremothecium gossypii (strain ATCC 10895 / CBS 109.51 / FGSC 9923 / NRRL Y-1056) (Yeast).